Consider the following 195-residue polypeptide: Adenylate kinase (195 aa).

Residue 8–16 coordinates ATP; sequence GIPGVGKTT.

It belongs to the archaeal adenylate kinase family.

The protein localises to the cytoplasm. It carries out the reaction AMP + ATP = 2 ADP. The protein is Adenylate kinase of Saccharolobus islandicus (strain M.14.25 / Kamchatka #1) (Sulfolobus islandicus).